We begin with the raw amino-acid sequence, 378 residues long: Zinc finger protein DPF3 (378 aa).

Lys-99 is covalently cross-linked (Glycyl lysine isopeptide (Lys-Gly) (interchain with G-Cter in SUMO2)). A disordered region spans residues 146 to 193; sequence LENDENVEEGNEEEDLEEDVPKRKNRTRGRARGSAGGRRRHDAASQED. The segment covering 148 to 163 has biased composition (acidic residues); it reads NDENVEEGNEEEDLEE. Positions 168 to 186 are enriched in basic residues; sequence RKNRTRGRARGSAGGRRRH. Residues 198-221 form a C2H2-type zinc finger; it reads YVCDICGKRYKNRPGLSYHYAHTH. The tract at residues 225–254 is disordered; sequence EEGDEAQDQETRSPPNHRNENHRPQKGPDG. PHD-type zinc fingers lie at residues 259 to 319 and 316 to 366; these read NNYC…CKSC and CKSC…CWEL. An interaction with HDGFL2 region spans residues 317–332; sequence KSCILCGTSENDDQLL. Position 323 is a phosphoserine (Gly-323).

This sequence belongs to the requiem/DPF family. In terms of assembly, component of the BAF complex, which includes at least actin (ACTB), ARID1A, ARID1B/BAF250, SMARCA2, SMARCA4/BRG1/BAF190A, ACTL6A/BAF53, ACTL6B/BAF53B, SMARCE1/BAF57, SMARCC1/BAF155, SMARCC2/BAF170, SMARCB1/SNF5/INI1, and one or more of SMARCD1/BAF60A, SMARCD2/BAF60B, or SMARCD3/BAF60C. In muscle cells, the BAF complex also contains DPF3. Interacts with acetylated histones H3 and H4. Component of neuron-specific chromatin remodeling complex (nBAF complex) composed of at least, ARID1A/BAF250A or ARID1B/BAF250B, SMARCD1/BAF60A, SMARCD3/BAF60C, SMARCA2/BRM/BAF190B, SMARCA4/BRG1/BAF190A, SMARCB1/BAF47, SMARCC1/BAF155, SMARCE1/BAF57, SMARCC2/BAF170, DPF1/BAF45B, DPF3/BAF45C, ACTL6B/BAF53B and actin. Interacts with HDGFL2. Interacts with SMARCA4/BRG1/BAF190A, SMARCC1/BAF155 and SMARCD1/BAF60A. Expressed in the heart and somites. Expressed in cerebellum and spinal cord, but not in cerebral cortex. Expressed specifically in post-mitotic neurons (at protein level).

It localises to the nucleus. Muscle-specific component of the BAF complex, a multiprotein complex involved in transcriptional activation and repression of select genes by chromatin remodeling (alteration of DNA-nucleosome topology). Specifically binds acetylated lysines on histone 3 and 4 (H3K14ac, H3K9ac, H4K5ac, H4K8ac, H4K12ac, H4K16ac). In the complex, it acts as a tissue-specific anchor between histone acetylations and methylations and chromatin remodeling. It thereby probably plays an essential role in heart and skeletal muscle development. Belongs to the neuron-specific chromatin remodeling complex (nBAF complex). During neural development a switch from a stem/progenitor to a post-mitotic chromatin remodeling mechanism occurs as neurons exit the cell cycle and become committed to their adult state. The transition from proliferating neural stem/progenitor cells to post-mitotic neurons requires a switch in subunit composition of the npBAF and nBAF complexes. As neural progenitors exit mitosis and differentiate into neurons, npBAF complexes which contain ACTL6A/BAF53A and PHF10/BAF45A, are exchanged for homologous alternative ACTL6B/BAF53B and DPF1/BAF45B or DPF3/BAF45C subunits in neuron-specific complexes (nBAF). The npBAF complex is essential for the self-renewal/proliferative capacity of the multipotent neural stem cells. The nBAF complex along with CREST plays a role regulating the activity of genes essential for dendrite growth. Its function is as follows. Acts as a regulator of myogenesis in cooperation with HDGFL2. Mediates the interaction of HDGFL2 with the BAF complex. HDGFL2-DPF3a activate myogenic genes by increasing chromatin accessibility through recruitment of SMARCA4/BRG1/BAF190A (ATPase subunit of the BAF complex) to myogenic gene promoters. This Mus musculus (Mouse) protein is Zinc finger protein DPF3 (Dpf3).